The chain runs to 338 residues: 1-aminocyclopropane-1-carboxylate deaminase (338 aa).

The residue at position 51 (lysine 51) is an N6-(pyridoxal phosphate)lysine. Serine 78 acts as the Nucleophile in catalysis.

The protein belongs to the ACC deaminase/D-cysteine desulfhydrase family. In terms of assembly, homotrimer. Pyridoxal 5'-phosphate serves as cofactor.

It carries out the reaction 1-aminocyclopropane-1-carboxylate + H2O = 2-oxobutanoate + NH4(+). Functionally, catalyzes a cyclopropane ring-opening reaction, the irreversible conversion of 1-aminocyclopropane-1-carboxylate (ACC) to ammonia and alpha-ketobutyrate. Allows growth on ACC as a nitrogen source. This chain is 1-aminocyclopropane-1-carboxylate deaminase, found in Burkholderia thailandensis (strain ATCC 700388 / DSM 13276 / CCUG 48851 / CIP 106301 / E264).